A 117-amino-acid chain; its full sequence is Large ribosomal subunit protein bL20 (117 aa).

Belongs to the bacterial ribosomal protein bL20 family.

Its function is as follows. Binds directly to 23S ribosomal RNA and is necessary for the in vitro assembly process of the 50S ribosomal subunit. It is not involved in the protein synthesizing functions of that subunit. This Leptospira biflexa serovar Patoc (strain Patoc 1 / Ames) protein is Large ribosomal subunit protein bL20.